The sequence spans 632 residues: DNA ligase (632 aa).

NAD(+) contacts are provided by residues N45 to D49 and S89 to I90. Catalysis depends on K127, which acts as the N6-AMP-lysine intermediate. NAD(+) contacts are provided by R143, E174, and K286. Residues C374, C377, C390, and C396 each contribute to the Zn(2+) site. The BRCT domain occupies D561–M632.

It belongs to the NAD-dependent DNA ligase family. LigA subfamily. Mg(2+) is required as a cofactor. It depends on Mn(2+) as a cofactor.

It catalyses the reaction NAD(+) + (deoxyribonucleotide)n-3'-hydroxyl + 5'-phospho-(deoxyribonucleotide)m = (deoxyribonucleotide)n+m + AMP + beta-nicotinamide D-nucleotide.. DNA ligase that catalyzes the formation of phosphodiester linkages between 5'-phosphoryl and 3'-hydroxyl groups in double-stranded DNA using NAD as a coenzyme and as the energy source for the reaction. It is essential for DNA replication and repair of damaged DNA. In Vesicomyosocius okutanii subsp. Calyptogena okutanii (strain HA), this protein is DNA ligase.